A 481-amino-acid polypeptide reads, in one-letter code: MPIYTSRSCFYLLLFHIILLCSVDKTLCRQTSSFVRSEFPAVDIPIDSKEFAVPKNQFSPQQVHITQGDYDGKAVIVSWVTFIDPGKSEVVYGTSPNSYDHSAQGKTTNYTYYDYTSGYIHHCLLDKLEYDTKYYYKIGKGDAAREFWFHTPPQIHPDASYTFGIIGDLGQTYNSLSTLEHYMKSKGQTVLFVGDLSYADRYSCNNGTRWDSWGRFVERSVAYQPWIWTVGNHEIEYRPDLGEVFPFRAYLNRYPTPHLASASSSPLWYSIRRASAHIIVLSSYSPFVKYTPQWLWLSEELTRVDREKTPWLIVLMHAPLYNSNEAHYMEGESMRVAFESWFVQYKVDLVFAGHVHAYERSYRISNIVYNITSGNRYPIPDKSAPVYITVGDGGNQEGLAERFSESQPDYSAFRESSYGHSTLELRNRTHAFYQWNRNDDGKHIPVDRIIFRNQYWASNTRRRRLKKTRPSQAVERLISSY.

Residues 1-36 (MPIYTSRSCFYLLLFHIILLCSVDKTLCRQTSSFVR) form the signal peptide. The N-linked (GlcNAc...) asparagine glycan is linked to N109. Fe cation is bound by residues D168, D195, and Y198. D195 provides a ligand contact to Zn(2+). Residue N206 is glycosylated (N-linked (GlcNAc...) asparagine). Residues N232 and H317 each coordinate Zn(2+). N232 serves as a coordination point for substrate. H327 functions as the Proton donor in the catalytic mechanism. Position 354 (H354) interacts with Zn(2+). 354-356 (HVH) is a substrate binding site. H356 lines the Fe cation pocket. N-linked (GlcNAc...) asparagine glycosylation is found at N370 and N427.

This sequence belongs to the metallophosphoesterase superfamily. Purple acid phosphatase family.

The protein resides in the vacuole lumen. The enzyme catalyses phosphoenolpyruvate + H2O = pyruvate + phosphate. In terms of biological role, phosphoenolpyruvate phosphatase that probably operates in the vacuole to release phosphate from phosphoenolpyruvate (PEP) under phosphorus starvation. This chain is Phosphoenolpyruvate phosphatase (ACPEPP), found in Allium cepa (Onion).